The following is a 338-amino-acid chain: Lipoate-protein ligase A (338 aa).

Positions 29-216 (SPDQRVLFLW…AFFAYYDEQV (188 aa)) constitute a BPL/LPL catalytic domain. Residues R71, 76-79 (GAVF), and K134 contribute to the ATP site. K134 lines the (R)-lipoate pocket.

It belongs to the LplA family. In terms of assembly, monomer.

The protein resides in the cytoplasm. It catalyses the reaction L-lysyl-[lipoyl-carrier protein] + (R)-lipoate + ATP = N(6)-[(R)-lipoyl]-L-lysyl-[lipoyl-carrier protein] + AMP + diphosphate + H(+). Its pathway is protein modification; protein lipoylation via exogenous pathway; protein N(6)-(lipoyl)lysine from lipoate: step 1/2. It participates in protein modification; protein lipoylation via exogenous pathway; protein N(6)-(lipoyl)lysine from lipoate: step 2/2. Its function is as follows. Catalyzes both the ATP-dependent activation of exogenously supplied lipoate to lipoyl-AMP and the transfer of the activated lipoyl onto the lipoyl domains of lipoate-dependent enzymes. The protein is Lipoate-protein ligase A of Yersinia pseudotuberculosis serotype IB (strain PB1/+).